We begin with the raw amino-acid sequence, 307 residues long: Thioredoxin reductase (307 aa).

FAD is bound at residue 36-43 (DNAAPGGK). Cys-138 and Cys-141 are disulfide-bonded. 278 to 287 (DIRIKDIRQI) provides a ligand contact to FAD.

Belongs to the class-II pyridine nucleotide-disulfide oxidoreductase family. As to quaternary structure, homodimer. The cofactor is FAD.

It is found in the cytoplasm. The enzyme catalyses [thioredoxin]-dithiol + NADP(+) = [thioredoxin]-disulfide + NADPH + H(+). The chain is Thioredoxin reductase (trxB) from Mycoplasmopsis pulmonis (strain UAB CTIP) (Mycoplasma pulmonis).